The chain runs to 297 residues: Carbamate kinase (297 aa).

This sequence belongs to the carbamate kinase family.

The protein resides in the cytoplasm. The enzyme catalyses hydrogencarbonate + NH4(+) + ATP = carbamoyl phosphate + ADP + H2O + H(+). It carries out the reaction carbamate + ATP = carbamoyl phosphate + ADP. It catalyses the reaction hydrogencarbonate + NH4(+) = carbamate + H2O + H(+). Its pathway is nitrogen metabolism; (S)-allantoin degradation. Functionally, kinase involved in the anaerobic nitrogen utilization via the assimilation of allantoin. Catalyzes the transfer of a phosphate group from carbamoyl phosphate to ADP to produce ATP and leave carbamate, which spontaneously hydrolyzes to ammonia and hydrogencarbonate. The protein is Carbamate kinase of Escherichia coli (strain K12).